The sequence spans 51 residues: Large ribosomal subunit protein bL33 (51 aa).

It belongs to the bacterial ribosomal protein bL33 family.

This is Large ribosomal subunit protein bL33 from Francisella philomiragia subsp. philomiragia (strain ATCC 25017 / CCUG 19701 / FSC 153 / O#319-036).